The primary structure comprises 499 residues: MEVRSESNITQARSDKLPLPPAVPKPRVQVWFVRVCSSILVWTCLVQLFAAGELWHSRIFTGLTNQISRFSAPVEPVPLPPPLPPPRNYTSNGILLVSCNGGLNQMRSAICDMVTVARLLNLTLVVPELDKTSFWADPSGFEDIFDVRHFIDSLRDEVRILRRLPKRFSRKYGYQMFEMPPVSWSDEKYYLKQVLPLFSKHKVVHFNRTDTRLANNGLPLSLQWLRCRVNFQGLKFTPQLEALGSKLVRILQQRGPFVALHLRYEMDMLAFSGCTHGCTEEEAEELKKMRYTYPWWREKEIVSEERRAQGLCPLTPEEVALVLKALGFEKNTQIYIAAGEIYGSEHRLSVLREAFPRIVKKEMLLESAELQQFQNHSSQMAALDFMVSVASNTFIPTYDGNMAKVVEGHRRYLGYKKTILLDRKRLVELLDLHHNKTLTWDQFAVAVKEAHERRAGAPTHRRVISDKPKEEDYFYANPQECLCEGTNCHDLFGHRNLTH.

Residues 31 to 50 form a helical; Signal-anchor for type II membrane protein membrane-spanning segment; it reads WFVRVCSSILVWTCLVQLFA. Residues Asn-88, Asn-121, and Asn-207 are each glycosylated (N-linked (GlcNAc...) asparagine). A substrate-binding site is contributed by 261–263; it reads HLR. N-linked (GlcNAc...) asparagine glycosylation is found at Asn-375, Asn-435, and Asn-496.

This sequence belongs to the glycosyltransferase GT106 family.

Its subcellular location is the golgi apparatus membrane. It carries out the reaction alpha-D-galacturonosyl-[(1-&gt;2)-alpha-L-rhamnosyl-(1-&gt;4)-alpha-D-galacturonosyl](n) + UDP-beta-L-rhamnose = [(1-&gt;2)-alpha-L-rhamnosyl-(1-&gt;4)-alpha-D-galacturonosyl](n+1) + UDP + H(+). Its pathway is glycan metabolism; pectin biosynthesis. Glycosyltransferase involved in the formation of rhamnogalacturonan I (RG-I) oligosaccharides in the seed coat mucilage, which is a specialized cell wall with abundant RG-I. Transfers the rhamnose residue from UDP-beta-L-rhamnose to RG-I oligosaccharides. In Arabidopsis thaliana (Mouse-ear cress), this protein is Rhamnogalacturonan I rhamnosyltransferase 1.